A 1030-amino-acid chain; its full sequence is Halotolerance protein 9 (1030 aa).

Positions 136–166 (CDHCRKRKIRCDEVDQQTKKCSNCIKFQLPC) form a DNA-binding region, zn(2)-C6 fungal-type. The interval 185–208 (HHATPGESLQTSNSISNPVASSSV) is disordered. The segment covering 196–208 (SNSISNPVASSSV) has biased composition (low complexity). 2 positions are modified to phosphoserine: serine 221 and serine 937.

Its subcellular location is the cytoplasm. The protein resides in the nucleus. Putative transcription factor involved in halotolerance. The sequence is that of Halotolerance protein 9 (HAL9) from Saccharomyces cerevisiae (strain ATCC 204508 / S288c) (Baker's yeast).